The chain runs to 608 residues: Aspartate--tRNA(Asp/Asn) ligase (608 aa).

An L-aspartate-binding site is contributed by E187. The interval Q211 to K214 is aspartate. The L-aspartate site is built by R233 and H461. Position 233–235 (R233–E235) interacts with ATP. E495 is a binding site for ATP. Residue R502 participates in L-aspartate binding. G547–R550 contacts ATP.

The protein belongs to the class-II aminoacyl-tRNA synthetase family. Type 1 subfamily. Homodimer.

The protein localises to the cytoplasm. The catalysed reaction is tRNA(Asx) + L-aspartate + ATP = L-aspartyl-tRNA(Asx) + AMP + diphosphate. Aspartyl-tRNA synthetase with relaxed tRNA specificity since it is able to aspartylate not only its cognate tRNA(Asp) but also tRNA(Asn). Reaction proceeds in two steps: L-aspartate is first activated by ATP to form Asp-AMP and then transferred to the acceptor end of tRNA(Asp/Asn). The sequence is that of Aspartate--tRNA(Asp/Asn) ligase from Chlorobium phaeobacteroides (strain BS1).